The sequence spans 181 residues: Large ribosomal subunit protein uL5 (181 aa).

It belongs to the universal ribosomal protein uL5 family. In terms of assembly, part of the 50S ribosomal subunit; part of the 5S rRNA/L5/L18/L25 subcomplex. Contacts the 5S rRNA and the P site tRNA. Forms a bridge to the 30S subunit in the 70S ribosome.

Its function is as follows. This is one of the proteins that bind and probably mediate the attachment of the 5S RNA into the large ribosomal subunit, where it forms part of the central protuberance. In the 70S ribosome it contacts protein S13 of the 30S subunit (bridge B1b), connecting the 2 subunits; this bridge is implicated in subunit movement. Contacts the P site tRNA; the 5S rRNA and some of its associated proteins might help stabilize positioning of ribosome-bound tRNAs. The sequence is that of Large ribosomal subunit protein uL5 from Helicobacter pylori (strain Shi470).